The following is a 123-amino-acid chain: Preprofallaxidin-3 (123 aa).

An N-terminal signal peptide occupies residues 1–22 (MASLKKSLFLVLFLGLVSLSIC). A propeptide spanning residues 23 to 46 (EEKKRENEDDAEDENHEEESEEKR) is cleaved from the precursor. The tract at residues 26-46 (KRENEDDAEDENHEEESEEKR) is disordered. Positions 30 to 42 (EDDAEDENHEEES) are enriched in acidic residues. The residue at position 62 (Leu62) is a Leucine amide. A propeptide spanning residues 66–70 (SEEKR) is cleaved from the precursor. Phe74 is subject to Phenylalanine amide. Residues 78–82 (SEEKR) constitute a propeptide that is removed on maturation. Phe88 is modified (phenylalanine amide). Residues 92–96 (SEEKR) constitute a propeptide that is removed on maturation. Ile102 bears the Isoleucine amide mark. Residues 106–110 (SEEKR) constitute a propeptide that is removed on maturation. Ile116 is subject to Isoleucine amide. A propeptide spanning residues 120 to 123 (KKKK) is cleaved from the precursor.

The protein belongs to the frog skin active peptide (FSAP) family. Brevinin subfamily. As to expression, expressed by the skin glands.

Its subcellular location is the secreted. Functionally, fallaxidin-1.1 shows no antibacterial activity against Gram-positive or Gram-negative bacteria. Does not inhibit the formation of NO by neuronal nitric oxide synthase. Has no effect on splenocyte proliferation or smooth muscle contraction. Its function is as follows. Fallaxidin-1.2 shows no antibacterial activity against Gram-positive or Gram-negative bacteria. Does not inhibit the formation of NO by neuronal nitric oxide synthase. Has no effect on splenocyte proliferation or smooth muscle contraction. In terms of biological role, fallaxidin-1.3 shows no antibacterial activity against Gram-positive or Gram-negative bacteria. Does not inhibit the formation of NO by neuronal nitric oxide synthase. Has no effect on splenocyte proliferation or smooth muscle contraction. Fallaxidin-3.2 shows antibacterial activity against the Gram-positive bacteria E.faecalis (MIC=100 uM) and L.lactis (MIC=500 uM). No antibacterial activity against the Gram-positive bacteria B.cereus, L.innocua, M.luteus, S.epidermidis, S.uberis and S.aureus, or the Gram-negative bacteria E.cloacae and E.coli. The polypeptide is Preprofallaxidin-3 (Litoria fallax (Eastern dwarf tree frog)).